Reading from the N-terminus, the 176-residue chain is NAD(P)H-quinone oxidoreductase subunit J (176 aa).

Polar residues-rich tracts occupy residues 1 to 12 and 20 to 30; these read MEKDSQATSSDT and ISQSLSKDGIP. The segment at 1–30 is disordered; that stretch reads MEKDSQATSSDTSIEKEGVISQSLSKDGIP.

It belongs to the complex I 30 kDa subunit family. NDH-1 can be composed of about 15 different subunits; different subcomplexes with different compositions have been identified which probably have different functions.

It localises to the cellular thylakoid membrane. The enzyme catalyses a plastoquinone + NADH + (n+1) H(+)(in) = a plastoquinol + NAD(+) + n H(+)(out). The catalysed reaction is a plastoquinone + NADPH + (n+1) H(+)(in) = a plastoquinol + NADP(+) + n H(+)(out). Its function is as follows. NDH-1 shuttles electrons from an unknown electron donor, via FMN and iron-sulfur (Fe-S) centers, to quinones in the respiratory and/or the photosynthetic chain. The immediate electron acceptor for the enzyme in this species is believed to be plastoquinone. Couples the redox reaction to proton translocation, and thus conserves the redox energy in a proton gradient. Cyanobacterial NDH-1 also plays a role in inorganic carbon-concentration. This Prochlorococcus marinus (strain AS9601) protein is NAD(P)H-quinone oxidoreductase subunit J.